A 389-amino-acid polypeptide reads, in one-letter code: Pyruvate dehydrogenase E1 component subunit alpha, somatic form, mitochondrial (389 aa).

The transit peptide at G1 to T28 directs the protein to the mitochondrion. N6-acetyllysine; alternate is present on K62. N6-succinyllysine; alternate is present on K62. Pyruvate contacts are provided by H91, Y117, R118, A156, G164, V166, D195, G196, A197, N224, and Y226. Residues Y117 and R118 each contribute to the thiamine diphosphate site. The thiamine diphosphate site is built by G164, V166, D195, G196, A197, and N224. D195 provides a ligand contact to Mg(2+). The Mg(2+) site is built by N224 and Y226. S231 carries the post-translational modification Phosphoserine; by PDK1. At K243 the chain carries N6-acetyllysine; alternate. An N6-succinyllysine; alternate modification is found at K243. An N6-succinyllysine modification is found at K276. H291 contributes to the thiamine diphosphate binding site. The residue at position 292 (S292) is a Phosphoserine; by PDK1, PDK2, PDK3 and PDK4. At S294 the chain carries Phosphoserine. At S299 the chain carries Phosphoserine; by PDK1, PDK2, PDK3 and PDK4. Y300 is modified (phosphotyrosine). K312 is subject to N6-acetyllysine; alternate. N6-succinyllysine; alternate is present on K312. Residues K320 and K335 each carry the N6-acetyllysine modification. K384 bears the N6-succinyllysine mark.

As to quaternary structure, heterotetramer of two PDHA1 and two PDHB subunits. The heterotetramer interacts with DLAT, and is part of the multimeric pyruvate dehydrogenase complex that contains multiple copies of pyruvate dehydrogenase (E1), dihydrolipoamide acetyltransferase (DLAT, E2) and lipoamide dehydrogenase (DLD, E3). These subunits are bound to an inner core composed of about 48 DLAT and 12 PDHX molecules. Requires thiamine diphosphate as cofactor. It depends on Mg(2+) as a cofactor. In terms of processing, phosphorylation at Ser-231, Ser-292 and Ser-299 by PDK family kinases inactivates the enzyme; for this phosphorylation at a single site is sufficient. Phosphorylation at Ser-292 interferes with access to active site, and thereby inactivates the enzyme. Dephosphorylation at all three sites, i.e. at Ser-231, Ser-292 and Ser-299, is required for reactivation. Post-translationally, acetylation alters the phosphorylation pattern. Deacetylated by SIRT3.

It localises to the mitochondrion matrix. It catalyses the reaction N(6)-[(R)-lipoyl]-L-lysyl-[protein] + pyruvate + H(+) = N(6)-[(R)-S(8)-acetyldihydrolipoyl]-L-lysyl-[protein] + CO2. Pyruvate dehydrogenase activity is inhibited by phosphorylation of PDHA1; it is reactivated by dephosphorylation. Its function is as follows. The pyruvate dehydrogenase complex catalyzes the overall conversion of pyruvate to acetyl-CoA and CO(2), and thereby links the glycolytic pathway to the tricarboxylic cycle. This is Pyruvate dehydrogenase E1 component subunit alpha, somatic form, mitochondrial (PDHA1) from Sus scrofa (Pig).